Reading from the N-terminus, the 71-residue chain is Putative membrane protein insertion efficiency factor (71 aa).

It belongs to the UPF0161 family.

The protein resides in the cell inner membrane. In terms of biological role, could be involved in insertion of integral membrane proteins into the membrane. This chain is Putative membrane protein insertion efficiency factor, found in Nitrosospira multiformis (strain ATCC 25196 / NCIMB 11849 / C 71).